The following is a 470-amino-acid chain: Sulfate adenylyltransferase subunit 1 (470 aa).

Residues 22–238 (KELLRFITCG…ETIKIDYAYT (217 aa)) form the tr-type G domain. The interval 31–38 (GSVDDGKS) is G1. Residue 31–38 (GSVDDGKS) participates in GTP binding. The G2 stretch occupies residues 89 to 93 (GITID). The interval 110 to 113 (DTPG) is G3. GTP-binding positions include 110–114 (DTPGH) and 165–168 (NKMD). A G4 region spans residues 165–168 (NKMD). The interval 202-204 (SAL) is G5.

The protein belongs to the TRAFAC class translation factor GTPase superfamily. Classic translation factor GTPase family. CysN/NodQ subfamily. Heterodimer composed of CysD, the smaller subunit, and CysN.

It catalyses the reaction sulfate + ATP + H(+) = adenosine 5'-phosphosulfate + diphosphate. It functions in the pathway sulfur metabolism; hydrogen sulfide biosynthesis; sulfite from sulfate: step 1/3. With CysD forms the ATP sulfurylase (ATPS) that catalyzes the adenylation of sulfate producing adenosine 5'-phosphosulfate (APS) and diphosphate, the first enzymatic step in sulfur assimilation pathway. APS synthesis involves the formation of a high-energy phosphoric-sulfuric acid anhydride bond driven by GTP hydrolysis by CysN coupled to ATP hydrolysis by CysD. The protein is Sulfate adenylyltransferase subunit 1 of Francisella tularensis subsp. tularensis (strain WY96-3418).